The sequence spans 97 residues: Early nodulin-75 (97 aa).

A disordered region spans residues 1–97; that stretch reads RPHVHPPPEH…PEYQPPHEKP (97 aa). Pro residues-rich tracts occupy residues 9–22 and 31–43; these read EHQPPLEHPPPEYQ and VHPPPEYQPPYQK. Residues 76-97 are compositionally biased toward basic and acidic residues; that stretch reads PPHEKPPHEHPPPEYQPPHEKP.

This sequence belongs to the nodulin 75 family.

Involved in early stages of root nodule development. This is Early nodulin-75 (ENOD2) from Medicago sativa (Alfalfa).